The chain runs to 106 residues: MRRKNQIKKRIIELIELAYNTAKSGNLELAREYVKLAEMYSRKGKVEIPLKYKRMFCRKCYTPLIIGVTERRRMRSKILIRTCLICNWQRRYVLSGNKRSDKENES.

Zn(2+) contacts are provided by Cys57, Cys60, Cys83, and Cys86.

Belongs to the eukaryotic/archaeal RNase P protein component 4 family. In terms of assembly, consists of a catalytic RNA component and at least 4-5 protein subunits. The cofactor is Zn(2+).

It localises to the cytoplasm. It carries out the reaction Endonucleolytic cleavage of RNA, removing 5'-extranucleotides from tRNA precursor.. Its function is as follows. Part of ribonuclease P, a protein complex that generates mature tRNA molecules by cleaving their 5'-ends. This chain is Ribonuclease P protein component 4, found in Saccharolobus solfataricus (strain ATCC 35092 / DSM 1617 / JCM 11322 / P2) (Sulfolobus solfataricus).